Consider the following 284-residue polypeptide: Lipoyl synthase (284 aa).

Positions 34, 39, 45, 60, 64, 67, and 272 each coordinate [4Fe-4S] cluster. A Radical SAM core domain is found at 46-261 (FARRTATFMI…EEIGYKLGFK (216 aa)).

It belongs to the radical SAM superfamily. Lipoyl synthase family. [4Fe-4S] cluster serves as cofactor.

It is found in the cytoplasm. It catalyses the reaction [[Fe-S] cluster scaffold protein carrying a second [4Fe-4S](2+) cluster] + N(6)-octanoyl-L-lysyl-[protein] + 2 oxidized [2Fe-2S]-[ferredoxin] + 2 S-adenosyl-L-methionine + 4 H(+) = [[Fe-S] cluster scaffold protein] + N(6)-[(R)-dihydrolipoyl]-L-lysyl-[protein] + 4 Fe(3+) + 2 hydrogen sulfide + 2 5'-deoxyadenosine + 2 L-methionine + 2 reduced [2Fe-2S]-[ferredoxin]. The protein operates within protein modification; protein lipoylation via endogenous pathway; protein N(6)-(lipoyl)lysine from octanoyl-[acyl-carrier-protein]: step 2/2. Functionally, catalyzes the radical-mediated insertion of two sulfur atoms into the C-6 and C-8 positions of the octanoyl moiety bound to the lipoyl domains of lipoate-dependent enzymes, thereby converting the octanoylated domains into lipoylated derivatives. The chain is Lipoyl synthase from Caldanaerobacter subterraneus subsp. tengcongensis (strain DSM 15242 / JCM 11007 / NBRC 100824 / MB4) (Thermoanaerobacter tengcongensis).